Here is a 300-residue protein sequence, read N- to C-terminus: D-alanine--D-alanine ligase (300 aa).

Residues 99–293 enclose the ATP-grasp domain; sequence KKILKYANIN…FAELLNSIVK (195 aa). Position 126 to 181 (126 to 181) interacts with ATP; sequence IEKIGYPVFVKPNSGGSSVATNLVKDKEGIKEAVELALKYDKEVMIENYTKGEEIT. Positions 248, 260, and 262 each coordinate Mg(2+).

The protein belongs to the D-alanine--D-alanine ligase family. The cofactor is Mg(2+). Mn(2+) serves as cofactor.

The protein localises to the cytoplasm. The enzyme catalyses 2 D-alanine + ATP = D-alanyl-D-alanine + ADP + phosphate + H(+). The protein operates within cell wall biogenesis; peptidoglycan biosynthesis. In terms of biological role, cell wall formation. The protein is D-alanine--D-alanine ligase of Clostridium botulinum (strain Langeland / NCTC 10281 / Type F).